A 516-amino-acid chain; its full sequence is Levanbiose-producing levanase (516 aa).

Over 1–5 (MNYIK) the chain is Cytoplasmic. A helical transmembrane segment spans residues 6–26 (AGKWLTVFLTFLGILLFIDLF). Topologically, residues 27–516 (PKEEHDQKTK…TVKHFDSIHE (490 aa)) are extracellular. Substrate-binding positions include 55–58 (WKND), 116–117 (WT), 181–182 (RD), glutamate 230, and tryptophan 318. Residue aspartate 58 is part of the active site.

Belongs to the glycosyl hydrolase 32 family.

It is found in the cell membrane. The enzyme catalyses Hydrolysis of (2-&gt;6)-beta-D-fructofuranan, to remove successive disaccharide residues as levanbiose, i.e. 6-(beta-D-fructofuranosyl)-D-fructose, from the end of the chain.. Catalyzes the degradation of levan mainly into levanbiose (difructose). Is not active on sucrose. The protein is Levanbiose-producing levanase (levB) of Bacillus subtilis (strain 168).